Consider the following 83-residue polypeptide: Apolipoprotein C-I (83 aa).

Residues methionine 1–alanine 26 form the signal peptide.

It belongs to the apolipoprotein C1 family.

The protein resides in the secreted. Its function is as follows. Inhibitor of lipoprotein binding to the low density lipoprotein (LDL) receptor, LDL receptor-related protein, and very low density lipoprotein (VLDL) receptor. Associates with high density lipoproteins (HDL) and the triacylglycerol-rich lipoproteins in the plasma and makes up about 10% of the protein of the VLDL and 2% of that of HDL. Appears to interfere directly with fatty acid uptake and is also the major plasma inhibitor of cholesteryl ester transfer protein (CETP). Binds free fatty acids and reduces their intracellular esterification. Modulates the interaction of APOE with beta-migrating VLDL and inhibits binding of beta-VLDL to the LDL receptor-related protein. This is Apolipoprotein C-I (APOC1) from Eonycteris spelaea (Lesser dawn bat).